The primary structure comprises 164 residues: MKTYRRQIREKILQALYTIELRDTDIDSAAGWLLTQEILDDPNAMKFFNMLIGSIKAHMSEIDCYIERHTFNWDMSRIAIIDKNILRMALAEILYCEDIPPKVSINEAIEIAKKFSSTEKSSKFVNGILDAIFNELKTDGKIHKNGRGLIDHSTAKLHKNETSK.

The protein belongs to the NusB family.

In terms of biological role, involved in transcription antitermination. Required for transcription of ribosomal RNA (rRNA) genes. Binds specifically to the boxA antiterminator sequence of the ribosomal RNA (rrn) operons. The polypeptide is Transcription antitermination protein NusB (Chlorobium limicola (strain DSM 245 / NBRC 103803 / 6330)).